Reading from the N-terminus, the 379-residue chain is Mating-type protein MAT-1 (379 aa).

A DNA-binding region (alpha box) is located at residues 60–117; the sequence is KARKALNAFVGFRCYYITIPMFKPWPMKKLSNLIGLLWEADPNKSLWSLMAKAWSTIR.

It belongs to the MATALPHA1 family.

It is found in the nucleus. Functionally, mating type proteins are sequence specific DNA-binding proteins that act as master switches in fungal differentiation by controlling gene expression in a cell type-specific fashion. Transcriptional activator that induces the transcription of alpha-specific genes. In Cochliobolus carbonum (strain 26-R-13) (Maize leaf spot fungus), this protein is Mating-type protein MAT-1 (MAT1).